Consider the following 673-residue polypeptide: UvrABC system protein C (673 aa).

The GIY-YIG domain occupies 16 to 95 (VEPGVYKFRD…IKEFDPRFNV (80 aa)). Residues 208–243 (DKMVRELERRMHAAAEDLDFETAARLRDDVQALRRA) enclose the UVR domain. The tract at residues 488-526 (RDEAERDELDGTAAGAPLVDDDETPTSRPGIDPTTGRPR) is disordered.

Belongs to the UvrC family. As to quaternary structure, interacts with UvrB in an incision complex.

It is found in the cytoplasm. In terms of biological role, the UvrABC repair system catalyzes the recognition and processing of DNA lesions. UvrC both incises the 5' and 3' sides of the lesion. The N-terminal half is responsible for the 3' incision and the C-terminal half is responsible for the 5' incision. The chain is UvrABC system protein C from Nocardia farcinica (strain IFM 10152).